The following is a 1050-amino-acid chain: MDS1 and EVI1 complex locus protein EVI1-B (1050 aa).

3 C2H2-type zinc fingers span residues 21–48 (YHCE…GTPH), 75–97 (HECK…LLSH), and 103–125 (YKCD…QMSH). The segment at 131–155 (YECENCSKQVFTDPSNLQRHIRSQH) adopts a C2H2-type 4; degenerate zinc-finger fold. 2 C2H2-type zinc fingers span residues 161–183 (HACS…KHIH) and 189–211 (FVCE…KRMH). Residues 218–240 (IKCKDCGQMFSTTSSLNKHRRFC) form a C2H2-type 7; atypical zinc finger. 2 disordered regions span residues 371–421 (ITEN…SDKD) and 529–612 (PLKV…EKKD). The span at 379-390 (RPHEKVSDHSES) shows a compositional bias: basic and acidic residues. Over residues 397 to 411 (STPSGSDLETTSGSD) the composition is skewed to polar residues. Positions 420 to 433 (KDKLKENGKLYKDK) match the Nuclear localization signal motif. Residues 529 to 542 (PLKVEPESPKESKK) are compositionally biased toward basic and acidic residues. The CTBP-binding motif 1 signature appears at 551–555 (AFDLT). Residues 564–576 (SPNAPSKSSAPTS) show a composition bias toward low complexity. The CTBP-binding motif 2 signature appears at 582–586 (PLDLS). Positions 588-598 (GSRSRATTTKQ) are enriched in polar residues. Residues 599–612 (TESRKNHIFGEKKD) are compositionally biased toward basic and acidic residues. 3 consecutive C2H2-type zinc fingers follow at residues 731–753 (YTCR…LRTH), 759–782 (YRCK…RNIH), and 788–810 (FKCH…LKKH). Residues 928 to 951 (KSEVNCKVSPSRHDDDDDDEEEDF) form a disordered region.

Homooligomer. Interacts with ctbp.

The protein resides in the nucleus. Its subcellular location is the nucleus speckle. In terms of biological role, transcriptional repressor during pronephros development. Plays a role in regionalization of the pronephros; may promote formation of the distal tubule and duct over formation of the glomus and proximal tubule. The chain is MDS1 and EVI1 complex locus protein EVI1-B (mecom-b) from Xenopus laevis (African clawed frog).